The following is a 175-amino-acid chain: Peptide methionine sulfoxide reductase MsrA (175 aa).

Residue Cys-10 is part of the active site.

The protein belongs to the MsrA Met sulfoxide reductase family.

The catalysed reaction is L-methionyl-[protein] + [thioredoxin]-disulfide + H2O = L-methionyl-(S)-S-oxide-[protein] + [thioredoxin]-dithiol. It catalyses the reaction [thioredoxin]-disulfide + L-methionine + H2O = L-methionine (S)-S-oxide + [thioredoxin]-dithiol. Its function is as follows. Has an important function as a repair enzyme for proteins that have been inactivated by oxidation. Catalyzes the reversible oxidation-reduction of methionine sulfoxide in proteins to methionine. This chain is Peptide methionine sulfoxide reductase MsrA, found in Psychrobacter sp. (strain PRwf-1).